The primary structure comprises 251 residues: Zinc import ATP-binding protein ZnuC (251 aa).

In terms of domain architecture, ABC transporter spans 5–220 (VSLENVSVSF…PEFISMFGPR (216 aa)). 37-44 (GPNGAGKS) is a binding site for ATP.

The protein belongs to the ABC transporter superfamily. Zinc importer (TC 3.A.1.15.5) family. In terms of assembly, the complex is composed of two ATP-binding proteins (ZnuC), two transmembrane proteins (ZnuB) and a solute-binding protein (ZnuA).

It is found in the cell inner membrane. The enzyme catalyses Zn(2+)(out) + ATP(in) + H2O(in) = Zn(2+)(in) + ADP(in) + phosphate(in) + H(+)(in). In terms of biological role, part of the ABC transporter complex ZnuABC involved in zinc import. Responsible for energy coupling to the transport system. Seems to be important for the virulence. The sequence is that of Zinc import ATP-binding protein ZnuC from Salmonella typhimurium (strain LT2 / SGSC1412 / ATCC 700720).